Consider the following 388-residue polypeptide: LL-diaminopimelate aminotransferase (388 aa).

2 residues coordinate substrate: tyrosine 16 and glycine 41. Residues tyrosine 70, 104 to 105, tyrosine 129, asparagine 179, tyrosine 210, and 239 to 241 contribute to the pyridoxal 5'-phosphate site; these read SK and SLS. Residues lysine 105, tyrosine 129, and asparagine 179 each contribute to the substrate site. Residue lysine 242 is modified to N6-(pyridoxal phosphate)lysine. Arginine 250 is a pyridoxal 5'-phosphate binding site. Arginine 368 contacts substrate.

It belongs to the class-I pyridoxal-phosphate-dependent aminotransferase family. LL-diaminopimelate aminotransferase subfamily. In terms of assembly, homodimer. It depends on pyridoxal 5'-phosphate as a cofactor.

The enzyme catalyses (2S,6S)-2,6-diaminopimelate + 2-oxoglutarate = (S)-2,3,4,5-tetrahydrodipicolinate + L-glutamate + H2O + H(+). It functions in the pathway amino-acid biosynthesis; L-lysine biosynthesis via DAP pathway; LL-2,6-diaminopimelate from (S)-tetrahydrodipicolinate (aminotransferase route): step 1/1. Its function is as follows. Involved in the synthesis of meso-diaminopimelate (m-DAP or DL-DAP), required for both lysine and peptidoglycan biosynthesis. Catalyzes the direct conversion of tetrahydrodipicolinate to LL-diaminopimelate. This is LL-diaminopimelate aminotransferase from Nitratidesulfovibrio vulgaris (strain DP4) (Desulfovibrio vulgaris).